We begin with the raw amino-acid sequence, 105 residues long: Phosphoribosyl-ATP pyrophosphatase (105 aa).

It belongs to the PRA-PH family.

The protein localises to the cytoplasm. The catalysed reaction is 1-(5-phospho-beta-D-ribosyl)-ATP + H2O = 1-(5-phospho-beta-D-ribosyl)-5'-AMP + diphosphate + H(+). It functions in the pathway amino-acid biosynthesis; L-histidine biosynthesis; L-histidine from 5-phospho-alpha-D-ribose 1-diphosphate: step 2/9. The polypeptide is Phosphoribosyl-ATP pyrophosphatase (Vesicomyosocius okutanii subsp. Calyptogena okutanii (strain HA)).